We begin with the raw amino-acid sequence, 444 residues long: Vacuolar protein sorting-associated protein 4B (444 aa).

One can recognise an MIT domain in the interval 4–82 (TNTNLQKAID…KEYLKKKEKK (79 aa)). A coiled-coil region spans residues 19–82 (AQEDKAGNYE…KEYLKKKEKK (64 aa)). Residues 77–118 (KKKEKKPQKPVKEEQSGPVDEKGNDSDGEAESDDPEKKKLQN) form a disordered region. The segment covering 86–101 (PVKEEQSGPVDEKGND) has biased composition (basic and acidic residues). Ser-102 and Ser-108 each carry phosphoserine. 174 to 181 (GPPGTGKS) is a binding site for ATP. Ser-410 is modified (phosphoserine).

The protein belongs to the AAA ATPase family. As to quaternary structure, proposed to be monomeric or homodimeric in nucleotide-free form and to oligomerize upon binding to ATP to form two stacked hexameric or heptameric rings with a central pore through which ESCRT-III substrates are translocated in an ATP-dependent manner. In vitro, associates on the inside of a helical tubular structure formed by a CHMP2A-CHMP3 polymer. Interacts with CHMP1A, CHMP1B, CHMP4B and CHMP6. Interacts with CHMP2A. Interacts with VPS4A; the interaction suggests a heteromeric assembly with VPS4A. Interacts with VTA1. In terms of tissue distribution, high level expression seen in the kidney. It is also expressed in the heart, brain, spleen, lung, liver, skeletal muscle, and testis.

It localises to the late endosome membrane. It catalyses the reaction ATP + H2O = ADP + phosphate + H(+). Involved in late steps of the endosomal multivesicular bodies (MVB) pathway. Recognizes membrane-associated ESCRT-III assemblies and catalyzes their disassembly, possibly in combination with membrane fission. Redistributes the ESCRT-III components to the cytoplasm for further rounds of MVB sorting. MVBs contain intraluminal vesicles (ILVs) that are generated by invagination and scission from the limiting membrane of the endosome and mostly are delivered to lysosomes enabling degradation of membrane proteins, such as stimulated growth factor receptors, lysosomal enzymes and lipids. VPS4A/B are required for the exosomal release of SDCBP, CD63 and syndecan. Functionally, (Microbial infection) In conjunction with the ESCRT machinery also appears to function in topologically equivalent membrane fission events, such as the terminal stages of cytokinesis and enveloped virus budding (lentiviruses). The polypeptide is Vacuolar protein sorting-associated protein 4B (Mus musculus (Mouse)).